Reading from the N-terminus, the 548-residue chain is Chaperonin GroEL (548 aa).

ATP is bound by residues 30–33, Lys51, 87–91, Gly415, 479–481, and Asp495; these read TLGP, DGTTT, and NAA.

The protein belongs to the chaperonin (HSP60) family. In terms of assembly, forms a cylinder of 14 subunits composed of two heptameric rings stacked back-to-back. Interacts with the co-chaperonin GroES.

The protein localises to the cytoplasm. The catalysed reaction is ATP + H2O + a folded polypeptide = ADP + phosphate + an unfolded polypeptide.. Functionally, together with its co-chaperonin GroES, plays an essential role in assisting protein folding. The GroEL-GroES system forms a nano-cage that allows encapsulation of the non-native substrate proteins and provides a physical environment optimized to promote and accelerate protein folding. The chain is Chaperonin GroEL from Aliivibrio fischeri (strain MJ11) (Vibrio fischeri).